Consider the following 912-residue polypeptide: Serine/threonine-protein kinase D1 (912 aa).

The residue at position 95 (tyrosine 95) is a Phosphotyrosine. A Phorbol-ester/DAG-type 1 zinc finger spans residues 146 to 196 (PHALFVHSYRAPAFCDHCGEMLWGLVRQGLKCEGCGLNYHKRCAFKIPNNC). Serine 205, serine 208, serine 219, and serine 223 each carry phosphoserine. The Phorbol-ester/DAG-type 2 zinc-finger motif lies at 270-320 (PHTFVIHSYTRPTVCQYCKKLLKGLFRQGLQCKDCRFNCHKRCAPKVPNNC). Phosphoserine is present on serine 345. The segment at 377–402 (NDSGEMQDPDPDHEDANRTISPSTSN) is disordered. Residues serine 397 and serine 401 each carry the phosphoserine; by MAPK13 modification. In terms of domain architecture, PH spans 422-541 (TVMKEGWMVH…WEIAIQHALM (120 aa)). A Phosphotyrosine modification is found at tyrosine 432. Serine 448 bears the Phosphoserine mark. Tyrosine 463 is modified (phosphotyrosine; by ABL). Residue serine 473 is modified to Phosphoserine. At tyrosine 502 the chain carries Phosphotyrosine. Residue serine 548 is modified to Phosphoserine. The Protein kinase domain occupies 583–839 (IFPDEVLGSG…VDKTLSHPWL (257 aa)). ATP is bound by residues 589–597 (LGSGQFGIV) and lysine 612. Residue aspartate 706 is the Proton acceptor of the active site. Serine 738 bears the Phosphoserine; by PKC/PRKCD mark. Residue serine 742 is modified to Phosphoserine; by autocatalysis and PKC/PRKCD. Tyrosine 749 carries the phosphotyrosine modification. A Phosphoserine; by autocatalysis modification is found at serine 910.

Belongs to the protein kinase superfamily. CAMK Ser/Thr protein kinase family. PKD subfamily. As to quaternary structure, interacts (via N-terminus) with ADAP1/CENTA1. Interacts with MAPK13. Interacts with DAPK1 in an oxidative stress-regulated manner. Interacts with USP28; the interaction induces phosphorylation of USP28 and activated KRAS-mediated stabilization of ZNF304. Interacts with AKAP13 (via C-terminal domain). Requires Mg(2+) as cofactor. Phosphorylated at Ser-397 and Ser-401 by MAPK13 during regulation of insulin secretion in pancreatic beta cells. Phosphorylated by DAPK1. Phosphorylated at Tyr-95 and by ABL at Tyr-463, which primes the kinase in response to oxidative stress, and promotes a second step activating phosphorylation at Ser-738/Ser-742 by PKRD. Phosphorylated on Ser-910 upon S.enterica infection in macrophages.

The protein localises to the cytoplasm. It localises to the cell membrane. The protein resides in the golgi apparatus. Its subcellular location is the trans-Golgi network. It carries out the reaction L-seryl-[protein] + ATP = O-phospho-L-seryl-[protein] + ADP + H(+). The catalysed reaction is L-threonyl-[protein] + ATP = O-phospho-L-threonyl-[protein] + ADP + H(+). Its activity is regulated as follows. Activated by DAG and phorbol esters. Phorbol-ester/DAG-type domain 1 binds DAG with high affinity and appears to play the dominant role in mediating translocation to the cell membrane and trans-Golgi network. Phorbol-ester/DAG-type domain 2 binds phorbol ester with higher affinity. Autophosphorylation of Ser-742 and phosphorylation of Ser-738 by PKC relieves auto-inhibition by the PH domain. Phosphorylation on Tyr-463 by the SRC-ABL1 pathway in response to oxidative stress, is also required for activation. Activated by DAPK1 under oxidative stress. Functionally, serine/threonine-protein kinase that converts transient diacylglycerol (DAG) signals into prolonged physiological effects downstream of PKC, and is involved in the regulation of MAPK8/JNK1 and Ras signaling, Golgi membrane integrity and trafficking, cell survival through NF-kappa-B activation, cell migration, cell differentiation by mediating HDAC7 nuclear export, cell proliferation via MAPK1/3 (ERK1/2) signaling, and plays a role in cardiac hypertrophy, VEGFA-induced angiogenesis, genotoxic-induced apoptosis and flagellin-stimulated inflammatory response. Phosphorylates the epidermal growth factor receptor (EGFR) on dual threonine residues, which leads to the suppression of epidermal growth factor (EGF)-induced MAPK8/JNK1 activation and subsequent JUN phosphorylation. Phosphorylates RIN1, inducing RIN1 binding to 14-3-3 proteins YWHAB, YWHAE and YWHAZ and increased competition with RAF1 for binding to GTP-bound form of Ras proteins (NRAS, HRAS and KRAS). Acts downstream of the heterotrimeric G-protein beta/gamma-subunit complex to maintain the structural integrity of the Golgi membranes, and is required for protein transport along the secretory pathway. In the trans-Golgi network (TGN), regulates the fission of transport vesicles that are on their way to the plasma membrane. May act by activating the lipid kinase phosphatidylinositol 4-kinase beta (PI4KB) at the TGN for the local synthesis of phosphorylated inositol lipids, which induces a sequential production of DAG, phosphatidic acid (PA) and lyso-PA (LPA) that are necessary for membrane fission and generation of specific transport carriers to the cell surface. Under oxidative stress, is phosphorylated at Tyr-463 via SRC-ABL1 and contributes to cell survival by activating IKK complex and subsequent nuclear translocation and activation of NFKB1. Involved in cell migration by regulating integrin alpha-5/beta-3 recycling and promoting its recruitment in newly forming focal adhesion. In osteoblast differentiation, mediates the bone morphogenetic protein 2 (BMP2)-induced nuclear export of HDAC7, which results in the inhibition of HDAC7 transcriptional repression of RUNX2. In neurons, plays an important role in neuronal polarity by regulating the biogenesis of TGN-derived dendritic vesicles, and is involved in the maintenance of dendritic arborization and Golgi structure in hippocampal cells. May potentiate mitogenesis induced by the neuropeptide bombesin or vasopressin by mediating an increase in the duration of MAPK1/3 (ERK1/2) signaling, which leads to accumulation of immediate-early gene products including FOS that stimulate cell cycle progression. Plays an important role in the proliferative response induced by low calcium in keratinocytes, through sustained activation of MAPK1/3 (ERK1/2) pathway. Downstream of novel PKC signaling, plays a role in cardiac hypertrophy by phosphorylating HDAC5, which in turn triggers XPO1/CRM1-dependent nuclear export of HDAC5, MEF2A transcriptional activation and induction of downstream target genes that promote myocyte hypertrophy and pathological cardiac remodeling. Mediates cardiac troponin I (TNNI3) phosphorylation at the PKA sites, which results in reduced myofilament calcium sensitivity, and accelerated crossbridge cycling kinetics. The PRKD1-HDAC5 pathway is also involved in angiogenesis by mediating VEGFA-induced specific subset of gene expression, cell migration, and tube formation. In response to VEGFA, is necessary and required for HDAC7 phosphorylation which induces HDAC7 nuclear export and endothelial cell proliferation and migration. During apoptosis induced by cytarabine and other genotoxic agents, PRKD1 is cleaved by caspase-3 at Asp-378, resulting in activation of its kinase function and increased sensitivity of cells to the cytotoxic effects of genotoxic agents. In epithelial cells, is required for transducing flagellin-stimulated inflammatory responses by binding and phosphorylating TLR5, which contributes to MAPK14/p38 activation and production of inflammatory cytokines. Acts as an activator of NLRP3 inflammasome assembly by mediating phosphorylation of NLRP3. May play a role in inflammatory response by mediating activation of NF-kappa-B. May be involved in pain transmission by directly modulating TRPV1 receptor. Plays a role in activated KRAS-mediated stabilization of ZNF304 in colorectal cancer (CRC) cells. Regulates nuclear translocation of transcription factor TFEB in macrophages upon live S.enterica infection. The chain is Serine/threonine-protein kinase D1 (PRKD1) from Homo sapiens (Human).